Reading from the N-terminus, the 294-residue chain is Syntaxin-19 (294 aa).

The t-SNARE coiled-coil homology domain occupies 209-271; sequence LSEIEQRHKE…NNTKEKFGLA (63 aa).

The protein belongs to the syntaxin family. As to quaternary structure, interacts with EGFR.

The protein localises to the cell membrane. It localises to the cytoplasm. Its function is as follows. Plays a role in endosomal trafficking of the epidermal growth factor receptor (EGFR). In Homo sapiens (Human), this protein is Syntaxin-19 (STX19).